A 254-amino-acid chain; its full sequence is Translation initiation factor 2 subunit alpha (254 aa).

In terms of domain architecture, S1 motif spans 10–81 (GDLVVVKITE…ERKVVDLSLK (72 aa)).

Belongs to the eIF-2-alpha family. As to quaternary structure, heterotrimer composed of an alpha, a beta and a gamma chain.

In terms of biological role, eIF-2 functions in the early steps of protein synthesis by forming a ternary complex with GTP and initiator tRNA. The protein is Translation initiation factor 2 subunit alpha of Thermoplasma acidophilum (strain ATCC 25905 / DSM 1728 / JCM 9062 / NBRC 15155 / AMRC-C165).